Here is a 75-residue protein sequence, read N- to C-terminus: Large ribosomal subunit protein bL31 (75 aa).

This sequence belongs to the bacterial ribosomal protein bL31 family. Type A subfamily. In terms of assembly, part of the 50S ribosomal subunit.

Functionally, binds the 23S rRNA. This chain is Large ribosomal subunit protein bL31, found in Gluconobacter oxydans (strain 621H) (Gluconobacter suboxydans).